Consider the following 273-residue polypeptide: Protein ALUMINUM SENSITIVE 3 (273 aa).

The next 7 helical transmembrane spans lie at 14-34 (WLIVFLKGMVKPAAALVVVLL), 51-71 (IYSVSRSFLQLSVIGFVLQFI), 76-96 (NSGWIILAYLFMVSVAGYTAG), 107-127 (YVAGLSILAGTSITMFLLVLL), 136-156 (YMIPIAGMLVGNAMTVTGVTM), 191-213 (ALVISLSPVLDSCKTVGLISLPG), and 228-248 (AIQLQIVVMNMMVGAATVSSI).

The protein belongs to the UPF0014 family. Expressed in roots, leaves, stems, and flowers.

The protein resides in the cell membrane. Its function is as follows. Required for aluminum (Al) resistance/tolerance, probably by translocating Al from sensitive tissues such as growing roots to tissues less sensisitive to the toxic effects of Al. The protein is Protein ALUMINUM SENSITIVE 3 (ALS3) of Arabidopsis thaliana (Mouse-ear cress).